Here is a 298-residue protein sequence, read N- to C-terminus: Tyrosine recombinase XerC (298 aa).

A Core-binding (CB) domain is found at 1–84 (MNHIQEAFLN…TLRTLYEYWM (84 aa)). The Tyr recombinase domain occupies 105–286 (YLPQFSLEEE…SNQQLRKVYL (182 aa)). Residues Arg-145, Lys-169, His-238, Arg-241, and His-264 contribute to the active site. Catalysis depends on Tyr-273, which acts as the O-(3'-phospho-DNA)-tyrosine intermediate.

The protein belongs to the 'phage' integrase family. XerC subfamily. As to quaternary structure, forms a cyclic heterotetrameric complex composed of two molecules of XerC and two molecules of XerD.

Its subcellular location is the cytoplasm. Its function is as follows. Site-specific tyrosine recombinase, which acts by catalyzing the cutting and rejoining of the recombining DNA molecules. The XerC-XerD complex is essential to convert dimers of the bacterial chromosome into monomers to permit their segregation at cell division. It also contributes to the segregational stability of plasmids. The protein is Tyrosine recombinase XerC of Staphylococcus aureus.